A 1004-amino-acid polypeptide reads, in one-letter code: Caspase recruitment domain-containing protein 14 (1004 aa).

Residues Asp15–Gln107 enclose the CARD domain. Residues Leu128 to Glu409 are a coiled coil. The segment at Glu409–Gln568 is maintains the protein in an inactive state. Ser544 bears the Phosphoserine mark. The region spanning Gln568 to Thr658 is the PDZ domain. One can recognise a Guanylate kinase-like domain in the interval Ala807–Ala990.

Interacts (via CARD domain) with BCL10 (via CARD domain). Forms a complex with MALT1 and BCL10; resulting in the formation of a CBM (CARD14-BLC10-MALT1) complex. Interacts with TRAF2, TRAF3 and TRAF6. In terms of tissue distribution, isoform 1 is detected in placenta and epidermal keratinocytes. Isoform 2 is detected in leukocytes and fetal brain.

It is found in the cytoplasm. Functionally, acts as a scaffolding protein that can activate the inflammatory transcription factor NF-kappa-B and p38/JNK MAP kinase signaling pathways. Forms a signaling complex with BCL10 and MALT1, and activates MALT1 proteolytic activity and inflammatory gene expression. MALT1 is indispensable for CARD14-induced activation of NF-kappa-B and p38/JNK MAP kinases. May play a role in signaling mediated by TRAF2, TRAF3 and TRAF6 and protects cells against apoptosis. In terms of biological role, not able to activate the inflammatory transcription factor NF-kappa-B and may function as a dominant negative regulator. The protein is Caspase recruitment domain-containing protein 14 (CARD14) of Homo sapiens (Human).